Here is a 268-residue protein sequence, read N- to C-terminus: Satratoxin biosynthesis SC1 cluster protein 4 (268 aa).

4 helical membrane-spanning segments follow: residues 34–54 (VWLVGIVQGCWGIAILLVHIF), 78–98 (LFAIYEALNSVLDFIVAGLAI), 113–133 (HLAGLFVLGAFSGFIGIIKIV), and 145–165 (AVIWNVVQMSISIICCCAPIY).

The protein belongs to the SAT4 family.

Its subcellular location is the membrane. The protein operates within mycotoxin biosynthesis. Its function is as follows. Part of the satratoxin SC1 cluster involved in the biosynthesis of satratoxins, trichothecene mycotoxins that are associated with human food poisonings. Satratoxins are suggested to be made by products of multiple gene clusters (SC1, SC2 and SC3) that encode 21 proteins in all, including polyketide synthases, acetyltransferases, and other enzymes expected to modify the trichothecene skeleton. SC1 encodes 10 proteins, SAT1 to SAT10. The largest are SAT8, which encodes a putative polyketide synthase (PKS) with a conventional non-reducing architecture, and SAT10, a putative protein containing four ankyrin repeats and thus may be involved in protein scaffolding. The putative short-chain reductase SAT3 may assist the PKS in some capacity. SAT6 contains a secretory lipase domain and acts probably as a trichothecene esterase. SAT5 encodes a putative acetyltransferase, and so, with SAT6, may affect endogenous protection from toxicity. The probable transcription factor SAT9 may regulate the expression of the SC1 cluster. SC2 encodes proteins SAT11 to SAT16, the largest of which encodes the putative reducing PKS SAT13. SAT11 is a cytochrome P450 monooxygenase, while SAT14 and SAT16 are probable acetyltransferases. The SC2 cluster may be regulated by the transcription factor SAT15. SC3 is a small cluster that encodes 5 proteins, SAT17 to SAT21. SAT21 is a putative MFS-type transporter which may have a role in exporting secondary metabolites. The four other proteins putatively encoded in SC3 include the taurine hydroxylase-like protein SAT17, the O-methyltransferase SAT18, the acetyltransferase SAT19, and the Cys6-type zinc finger SAT20, the latter being probably involved in regulation of SC3 expression. The chain is Satratoxin biosynthesis SC1 cluster protein 4 from Stachybotrys chartarum (strain CBS 109288 / IBT 7711) (Toxic black mold).